The primary structure comprises 139 residues: ATP synthase epsilon chain 2 (139 aa).

Belongs to the ATPase epsilon chain family. As to quaternary structure, F-type ATPases have 2 components, CF(1) - the catalytic core - and CF(0) - the membrane proton channel. CF(1) has five subunits: alpha(3), beta(3), gamma(1), delta(1), epsilon(1). CF(0) has three main subunits: a, b and c.

It is found in the cell inner membrane. Functionally, produces ATP from ADP in the presence of a proton gradient across the membrane. In Ralstonia nicotianae (strain ATCC BAA-1114 / GMI1000) (Ralstonia solanacearum), this protein is ATP synthase epsilon chain 2 (atpC2).